A 310-amino-acid chain; its full sequence is Cytochrome f (310 aa).

Residues 1–26 (MNIKLTLLVLISIINLMIIQPIQTLA) form the signal peptide. Residues F27, C47, C50, and H51 each contribute to the heme site. The helical transmembrane segment at 276 to 296 (IKGMIVFFFTVTIAQIFFVLK) threads the bilayer.

Belongs to the cytochrome f family. In terms of assembly, the 4 large subunits of the cytochrome b6-f complex are cytochrome b6, subunit IV (17 kDa polypeptide, petD), cytochrome f and the Rieske protein, while the 4 small subunits are PetG, PetL, PetM and PetN. The complex functions as a dimer. The cofactor is heme.

The protein resides in the plastid. Its subcellular location is the chloroplast thylakoid membrane. Component of the cytochrome b6-f complex, which mediates electron transfer between photosystem II (PSII) and photosystem I (PSI), cyclic electron flow around PSI, and state transitions. This chain is Cytochrome f, found in Gracilaria tenuistipitata var. liui (Red alga).